Reading from the N-terminus, the 149-residue chain is Large ribosomal subunit protein bL9 (149 aa).

The protein belongs to the bacterial ribosomal protein bL9 family.

Its function is as follows. Binds to the 23S rRNA. The chain is Large ribosomal subunit protein bL9 from Salmonella dublin (strain CT_02021853).